Reading from the N-terminus, the 317-residue chain is Melanocyte-stimulating hormone receptor (317 aa).

Over 1 to 37 (MPVQGSQRRLLGSLNSTPTATPHLGLAANQTGAWCLE) the chain is Extracellular. N-linked (GlcNAc...) asparagine glycosylation is present at Asn29. Residues 38–63 (VSIPDGLFLSLGLVSLVENVLVVTAI) traverse the membrane as a helical segment. Residues 64 to 72 (AKNRNLHSP) are Cytoplasmic-facing. Residues 73 to 93 (MYCFICCLALSDLLVSGSNML) form a helical membrane-spanning segment. Over 94 to 118 (ETAVTLLLEAGALAARAAVVQQLDN) the chain is Extracellular. Residues 119–140 (VIDVITCSSMLSSLCFLGAIAV) form a helical membrane-spanning segment. The Cytoplasmic segment spans residues 141-163 (DRYISIFYALRYHSIVTLPRARR). Residues 164–183 (AVAAIWVASVLFSMLFIAYY) form a helical membrane-spanning segment. At 184–191 (DHAAVLLC) the chain is on the extracellular side. The helical transmembrane segment at 192–211 (LVVFFLAMLVLMAVLYVHML) threads the bilayer. The Cytoplasmic portion of the chain corresponds to 212-240 (ARACQHAQGIARLHKRQRPAHQGFGLKGA). The helical transmembrane segment at 241-266 (ATLTILLGIFFLCWGPFFLHLTLIVL) threads the bilayer. At 267–279 (CPQHPTCSCIFKN) the chain is on the extracellular side. A helical transmembrane segment spans residues 280 to 300 (FNLFLALIICNAIIDPLIYAF). Residues 301 to 317 (RSQELRRTLKEVLLCSW) lie on the Cytoplasmic side of the membrane. The S-palmitoyl cysteine moiety is linked to residue Cys315.

This sequence belongs to the G-protein coupled receptor 1 family. Interacts with MGRN1, but does not undergo MGRN1-mediated ubiquitination; this interaction competes with GNAS-binding and thus inhibits agonist-induced cAMP production. Interacts with OPN3; the interaction results in a decrease in MC1R-mediated cAMP signaling and ultimately a decrease in melanin production in melanocytes.

The protein resides in the cell membrane. In terms of biological role, receptor for MSH (alpha, beta and gamma) and ACTH. The activity of this receptor is mediated by G proteins which activate adenylate cyclase. Mediates melanogenesis, the production of eumelanin (black/brown) and phaeomelanin (red/yellow), via regulation of cAMP signaling in melanocytes. The sequence is that of Melanocyte-stimulating hormone receptor (MC1R) from Allenopithecus nigroviridis (Allen's swamp monkey).